A 259-amino-acid polypeptide reads, in one-letter code: Thiazole synthase (259 aa).

The active-site Schiff-base intermediate with DXP is K98. Residues G159, 185–186, and 207–208 each bind 1-deoxy-D-xylulose 5-phosphate; these read AG and NS.

This sequence belongs to the ThiG family. As to quaternary structure, homotetramer. Forms heterodimers with either ThiH or ThiS.

Its subcellular location is the cytoplasm. The catalysed reaction is [ThiS sulfur-carrier protein]-C-terminal-Gly-aminoethanethioate + 2-iminoacetate + 1-deoxy-D-xylulose 5-phosphate = [ThiS sulfur-carrier protein]-C-terminal Gly-Gly + 2-[(2R,5Z)-2-carboxy-4-methylthiazol-5(2H)-ylidene]ethyl phosphate + 2 H2O + H(+). It participates in cofactor biosynthesis; thiamine diphosphate biosynthesis. Functionally, catalyzes the rearrangement of 1-deoxy-D-xylulose 5-phosphate (DXP) to produce the thiazole phosphate moiety of thiamine. Sulfur is provided by the thiocarboxylate moiety of the carrier protein ThiS. In vitro, sulfur can be provided by H(2)S. This Chlorobium limicola (strain DSM 245 / NBRC 103803 / 6330) protein is Thiazole synthase.